The primary structure comprises 1227 residues: Beta-alanyl-bioamine nonribosomal peptide synthetase (1227 aa).

Positions 1-850 (MPQSTAQLKS…FGKNSRDFKL (850 aa)) are adenylation. Positions 851–931 (SRGRERARKV…SILTSLQNTE (81 aa)) constitute a Carrier domain. Serine 892 is modified (O-(pantetheine 4'-phosphoryl)serine). The interval 932–1227 (SDFLKTQEPF…YMIKELNPSS (296 aa)) is condensation.

The protein belongs to the NRP synthetase family. Requires pantetheine 4'-phosphate as cofactor. In terms of tissue distribution, in virgin and paired males, bilaterally expressed in some cells in the head. During pairing, expressed throughout the ventral side of the body probably in ciliated neurons. Highly expressed in virgin females in cells throughout the body and only weakly expressed in sexually mature females. In virgin females, expressed in some cells in the head and on the dorsal surface and lateral edges of body.

It catalyses the reaction tryptamine + beta-alanine + ATP = beta-alanyl-tryptamine + AMP + diphosphate + H(+). The catalysed reaction is beta-alanine + ATP + H(+) = beta-alanyl-5'-AMP + diphosphate. The enzyme catalyses beta-alanyl-5'-AMP + holo-[peptidyl-carrier protein] = beta-alanyl-[peptidyl-carrier protein] + AMP + H(+). It carries out the reaction beta-alanyl-[peptidyl-carrier protein] + tryptamine = beta-alanyl-tryptamine + holo-[peptidyl-carrier protein] + H(+). Functionally, catalyzes the condensation of beta-alanine with tryptamine to form beta-alanyl-tryptamine (BATT). Beta-alanyl-tryptamine is an essential pheromone produced by the male that stimulates female sexual development during pairing. The protein is Beta-alanyl-bioamine nonribosomal peptide synthetase of Schistosoma mansoni (Blood fluke).